A 277-amino-acid polypeptide reads, in one-letter code: Carbonyl reductase [NADPH] 1 (277 aa).

Residues valine 10–leucine 34, aspartate 63–isoleucine 64, and asparagine 90 contribute to the NADP(+) site. Serine 30 bears the Phosphoserine mark. Residues phenylalanine 95–methionine 97 and glutamine 106 contribute to the glutathione site. Serine 140 provides a ligand contact to substrate. Position 193–194 (alanine 193–tyrosine 194) interacts with glutathione. Catalysis depends on tyrosine 194, which acts as the Proton acceptor. NADP(+) contacts are provided by residues tyrosine 194–lysine 198 and valine 231–threonine 233.

Belongs to the short-chain dehydrogenases/reductases (SDR) family. Monomer. In terms of tissue distribution, present in liver and kidney.

Its subcellular location is the cytoplasm. The catalysed reaction is a secondary alcohol + NADP(+) = a ketone + NADPH + H(+). The enzyme catalyses prostaglandin F2alpha + NADP(+) = prostaglandin E2 + NADPH + H(+). It catalyses the reaction prostaglandin E1 + NADP(+) = 15-oxoprostaglandin E1 + NADPH + H(+). It carries out the reaction menadione + NADPH + H(+) = menadiol + NADP(+). The catalysed reaction is prostaglandin D2 + NADP(+) = 15-oxoprostaglandin D2 + NADPH + H(+). The enzyme catalyses prostaglandin E2 + NADP(+) = 15-oxoprostaglandin E2 + NADPH + H(+). It catalyses the reaction prostaglandin F2alpha + NADP(+) = 15-oxoprostaglandin F2alpha + NADPH + H(+). It carries out the reaction daunorubicin + NADPH + H(+) = 13-dihydrodaunorubicin + NADP(+). The catalysed reaction is S-nitrosoglutathione + NADPH + H(+) = S-(hydroxysulfenamide)glutathione + NADP(+). The enzyme catalyses a primary alcohol + NADP(+) = an aldehyde + NADPH + H(+). It catalyses the reaction cortisol + NADPH + H(+) = 20beta-dihydrocortisol + NADP(+). It carries out the reaction corticosterone + NADPH + H(+) = 20beta-dihydrocorticosterone + NADP(+). NADPH-dependent reductase with broad substrate specificity. Catalyzes the reduction of a wide variety of carbonyl compounds including quinones, prostaglandins, menadione, plus various xenobiotics. Catalyzes the reduction of the antitumor anthracyclines doxorubicin and daunorubicin to the cardiotoxic compounds doxorubicinol and daunorubicinol. Can convert prostaglandin E to prostaglandin F2-alpha. Can bind glutathione, which explains its higher affinity for glutathione-conjugated substrates. Catalyzes the reduction of S-nitrosoglutathione. In addition, participates in the glucocorticoid metabolism by catalyzing the NADPH-dependent cortisol/corticosterone into 20beta-dihydrocortisol (20b-DHF) or 20beta-corticosterone (20b-DHB), which are weak agonists of NR3C1 and NR3C2 in adipose tissue. The chain is Carbonyl reductase [NADPH] 1 from Oryctolagus cuniculus (Rabbit).